Consider the following 181-residue polypeptide: Adenine phosphoribosyltransferase (181 aa).

It belongs to the purine/pyrimidine phosphoribosyltransferase family. In terms of assembly, homodimer.

Its subcellular location is the cytoplasm. It catalyses the reaction AMP + diphosphate = 5-phospho-alpha-D-ribose 1-diphosphate + adenine. It functions in the pathway purine metabolism; AMP biosynthesis via salvage pathway; AMP from adenine: step 1/1. Functionally, catalyzes a salvage reaction resulting in the formation of AMP, that is energically less costly than de novo synthesis. The chain is Adenine phosphoribosyltransferase from Psychromonas ingrahamii (strain DSM 17664 / CCUG 51855 / 37).